The sequence spans 1164 residues: Receptor-like protein kinase BRI1-like 3 (1164 aa).

The signal sequence occupies residues 1–23; it reads MKQQWQFLILCLLVLFLTVDSRG. The Extracellular segment spans residues 24–772; sequence RRLLSDDVND…RSHAHPKKQS (749 aa). A glycan (N-linked (GlcNAc...) asparagine) is linked at Asn-32. Residues 65 to 72 carry the Cys pair 1 motif; that stretch reads CTWRGVSC. 20 LRR repeats span residues 77-98, 102-123, 125-146, 151-173, 176-197, 202-224, 227-248, 252-274, 278-300, 303-325, 327-347, 352-375, 376-397, 403-424, 427-448, 451-473, 476-498, 500-523, 524-546, and 548-570; these read RVIG…NNLT, NLRS…SSSG, SLEV…DYVF, NLVS…PSAS, RITT…TFIA, SLKH…SFGL, NLTV…VSLS, LLET…DYWG, NLRQ…LSLL, TLEV…FTSC, SLQS…STVV, RITN…TNCS, NLRV…GFCS, VLEK…ELGK, SLKT…EIWT, KLSD…ICVD, NLET…ISKC, NMLW…GKLE, KLAI…LGNC, and NLIW…LASQ. Residues Asn-96 and Asn-112 are each glycosylated (N-linked (GlcNAc...) asparagine). Asn-156 carries an N-linked (GlcNAc...) asparagine glycan. Residues Asn-212, Asn-227, and Asn-257 are each glycosylated (N-linked (GlcNAc...) asparagine). N-linked (GlcNAc...) asparagine glycans are attached at residues Asn-362 and Asn-373. Asn-461 carries N-linked (GlcNAc...) asparagine glycosylation. Asn-532, Asn-558, and Asn-638 each carry an N-linked (GlcNAc...) asparagine glycan. LRR repeat units lie at residues 640 to 662, 664 to 686, 688 to 711, and 712 to 734; these read SMIY…YGAM, YLQV…FGGL, AIGV…GGLS, and FLSD…GQLT. Residues Asn-722 and Asn-743 are each glycosylated (N-linked (GlcNAc...) asparagine). The Cys pair 2 signature appears at 748 to 755; sequence CGVPLPPC. The chain crosses the membrane as a helical span at residues 773-793; that stretch reads IATGMSAGIVFSFMCIVMLIM. Topologically, residues 794-1164 are cytoplasmic; sequence ALYRARKVQK…LVEESRDKEP (371 aa). A phosphothreonine mark is found at Thr-847 and Thr-855. The region spanning 858 to 1136 is the Protein kinase domain; sequence FSADSMIGSG…QVMTMFKELV (279 aa). ATP-binding positions include 864 to 872 and Lys-886; that span reads IGSGGFGDV. Tyr-931 is modified (phosphotyrosine). The Proton acceptor role is filled by Asp-985. Phosphoserine is present on Ser-1020. Phosphotyrosine is present on Tyr-1028.

It belongs to the protein kinase superfamily. Ser/Thr protein kinase family. Autophosphorylated on Tyr and Thr residues. Predominantly expressed in vascular tissues. Expressed only during postembryonic development with a very discrete pattern of expression, preferentially in the two protophloem cell files at the elongation zone of the root. The expression in these two cell files attenuates as the phloem cells differentiate in the upper root. In cotyledons and leaves, it is expressed in phloem cells, starting at the cotyledons and shoot apex, moving toward the basal part of the leaves, where the expression is weak. Expressed in the secondary and tertiary veins and in the upper part of the cotyledons and leaves. Weakly or not expressed in the inflorescence stems. Has some complementary expression with BRL1.

It is found in the cell membrane. It carries out the reaction L-seryl-[protein] + ATP = O-phospho-L-seryl-[protein] + ADP + H(+). The enzyme catalyses L-threonyl-[protein] + ATP = O-phospho-L-threonyl-[protein] + ADP + H(+). The catalysed reaction is L-tyrosyl-[protein] + ATP = O-phospho-L-tyrosyl-[protein] + ADP + H(+). Functionally, receptor with a dual specificity kinase activity acting on both serine/threonine- and tyrosine-containing substrates. Binds brassinolide. Regulates, in response to brassinosteroid binding, a signaling cascade involved in plant development. May be involved in cell growth and vascular differentiation. The polypeptide is Receptor-like protein kinase BRI1-like 3 (BRL3) (Arabidopsis thaliana (Mouse-ear cress)).